Here is a 346-residue protein sequence, read N- to C-terminus: UDP-N-acetylenolpyruvoylglucosamine reductase (346 aa).

Residues 22 to 194 enclose the FAD-binding PCMH-type domain; that stretch reads GFDVRARFAC…TSVTFRLPKV (173 aa). Arg170 is a catalytic residue. Ser246 (proton donor) is an active-site residue. Glu342 is an active-site residue.

This sequence belongs to the MurB family. It depends on FAD as a cofactor.

The protein localises to the cytoplasm. The enzyme catalyses UDP-N-acetyl-alpha-D-muramate + NADP(+) = UDP-N-acetyl-3-O-(1-carboxyvinyl)-alpha-D-glucosamine + NADPH + H(+). The protein operates within cell wall biogenesis; peptidoglycan biosynthesis. Functionally, cell wall formation. The sequence is that of UDP-N-acetylenolpyruvoylglucosamine reductase from Paraburkholderia xenovorans (strain LB400).